Here is a 96-residue protein sequence, read N- to C-terminus: Cystatin (96 aa).

Residues Asp22 to Ser65 enclose the Cystatin domain. Residue Asn29 is glycosylated (N-linked (GlcNAc...) asparagine).

Belongs to the cystatin family. Interacts with cathepsin L-like peptidase; the interaction results in inhibition of cathepsin L-like peptidase activity. As to expression, salivary gland. Midgut.

Cysteine proteinase inhibitor. Inhibits cathepsin L-like peptidase. Increases cell viability following apoptosis induction by staurosporine. Inhibits human cathepsin S (CTSS), human cathepsin L2 (CTSV), human cathepsin L (CTSL), human cathepsin B (CTSB) and papain. Its function is as follows. (Microbial infection) Modulates dengue virus type 2 replication in salivary glands. In Aedes aegypti (Yellowfever mosquito), this protein is Cystatin.